Consider the following 291-residue polypeptide: Methylsterol monooxygenase 1-3 (291 aa).

3 consecutive transmembrane segments (helical) span residues 41–61 (TILVLFLVFSLAPFPLVIVEW), 92–112 (FLLVVGTLQIVSYPSIQMVGI), and 114–134 (SGLPLPSLMEIVAQLVVYFLI). The region spanning 128 to 263 (LVVYFLIEDY…FTYCDYIYGT (136 aa)) is the Fatty acid hydroxylase domain. The Histidine box-1 signature appears at 143–147 (HRWMH). Residues 156–160 (HRIHH) carry the Histidine box-2 motif. The helical transmembrane segment at 178-198 (ILILGIPTFLGPAIAPGHIMT) threads the bilayer. A Histidine box-3 motif is present at residues 235–241 (YHDYHHY).

This sequence belongs to the sterol desaturase family. In terms of assembly, interacts with ACBP1. Fe cation is required as a cofactor. In terms of tissue distribution, expressed at low levels in leaves, roots, siliques and flowers.

The protein localises to the endoplasmic reticulum membrane. The enzyme catalyses 4,4-dimethyl-5alpha-cholest-7-en-3beta-ol + 6 Fe(II)-[cytochrome b5] + 3 O2 + 5 H(+) = 4alpha-carboxy-4beta-methyl-5alpha-cholest-7-ene-3beta-ol + 6 Fe(III)-[cytochrome b5] + 4 H2O. It catalyses the reaction 24-methylidenelophenol + 6 Fe(II)-[cytochrome b5] + 3 O2 + 5 H(+) = 4alpha-carboxy-ergosta-7,24(24(1))-dien-3beta-ol + 6 Fe(III)-[cytochrome b5] + 4 H2O. In terms of biological role, non-heme iron oxygenase involved in sterols biosynthesis by catalyzing the removal of the first methyl group at the C-4 position. 4,4-dimethyl-9-beta,19-cyclopropylsterols such as 24-methylenecycloartanol are the preferred substrates. This is Methylsterol monooxygenase 1-3 from Arabidopsis thaliana (Mouse-ear cress).